The chain runs to 79 residues: MNCYLILTVALLLTSAMTGTTTAGQLNKKGVTLREDDRFPCNPGGCACRPLDSYSYTCQSPSSSTANCEGNECVSEADW.

The N-terminal stretch at 1–23 (MNCYLILTVALLLTSAMTGTTTA) is a signal peptide. Positions 24-37 (GQLNKKGVTLREDD) are excised as a propeptide. Disulfide bonds link Cys-41/Cys-58, Cys-46/Cys-68, and Cys-48/Cys-73.

Expressed by the venom duct.

The protein resides in the secreted. The chain is Conotoxin Cl9.4 from Californiconus californicus (California cone).